Here is a 190-residue protein sequence, read N- to C-terminus: MALVLMVVGLGNPGPRYATTRHNAGFMVVDLLADDLGITLDRTREQALTGQGLVGNNRVLLVKPQTYMNNSGQAVAPLARWYGIAPEAILVIHDDLDLAPGRLRLRRGGSSGGHRGLQSIITHLGTTAVPRLKIGIGRPPLGQNVIDYVLKPFSEGDWELIRPVLLEAARAARFLLEGGSMDEAMNRFNH.

A tRNA-binding site is contributed by Tyr-17. His-22 (proton acceptor) is an active-site residue. TRNA is bound by residues Tyr-67 and Asn-69.

Belongs to the PTH family. As to quaternary structure, monomer.

It localises to the cytoplasm. The catalysed reaction is an N-acyl-L-alpha-aminoacyl-tRNA + H2O = an N-acyl-L-amino acid + a tRNA + H(+). Hydrolyzes ribosome-free peptidyl-tRNAs (with 1 or more amino acids incorporated), which drop off the ribosome during protein synthesis, or as a result of ribosome stalling. Its function is as follows. Catalyzes the release of premature peptidyl moieties from peptidyl-tRNA molecules trapped in stalled 50S ribosomal subunits, and thus maintains levels of free tRNAs and 50S ribosomes. In Moorella thermoacetica (strain ATCC 39073 / JCM 9320), this protein is Peptidyl-tRNA hydrolase.